The chain runs to 214 residues: Small ribosomal subunit protein uS5 (214 aa).

The S5 DRBM domain occupies L55–V118.

Belongs to the universal ribosomal protein uS5 family. As to quaternary structure, part of the 30S ribosomal subunit. Contacts protein S4.

Its function is as follows. With S4 and S12 plays an important role in translational accuracy. The chain is Small ribosomal subunit protein uS5 from Staphylothermus marinus (strain ATCC 43588 / DSM 3639 / JCM 9404 / F1).